The primary structure comprises 245 residues: MIIPALDLIDGTVVRLHQGDYGKQRDYGNDPLPRLQDYAAQGAEVLHLVDLTGAKDPAKRQIPLIKTLVAGVNVPVQVGGGVRSEEDVAALLEAGVARVVVGSTAVKSPEMVKGWFERFGTDALVLALDVRIDEQGNKQVAVSGWQENSGVSLEQLVETYLPVGLKHVLCTDISRDGTLAGSNVSLYEEVCARYPQVAFQSSGGIGDIDDVAALRGTGVRGVIVGRALLEGKFTVKEAIACWQNA.

Residue aspartate 7 is the Proton acceptor of the active site. Aspartate 129 serves as the catalytic Proton donor.

Belongs to the HisA/HisF family.

The protein resides in the cytoplasm. It carries out the reaction 1-(5-phospho-beta-D-ribosyl)-5-[(5-phospho-beta-D-ribosylamino)methylideneamino]imidazole-4-carboxamide = 5-[(5-phospho-1-deoxy-D-ribulos-1-ylimino)methylamino]-1-(5-phospho-beta-D-ribosyl)imidazole-4-carboxamide. It functions in the pathway amino-acid biosynthesis; L-histidine biosynthesis; L-histidine from 5-phospho-alpha-D-ribose 1-diphosphate: step 4/9. The sequence is that of 1-(5-phosphoribosyl)-5-[(5-phosphoribosylamino)methylideneamino] imidazole-4-carboxamide isomerase from Escherichia coli O81 (strain ED1a).